Consider the following 432-residue polypeptide: Amino-acid acetyltransferase (432 aa).

The N-acetyltransferase domain maps to 286–425 (EVVREASIED…ASLYNYQRNS (140 aa)).

The protein belongs to the acetyltransferase family. ArgA subfamily.

The protein localises to the cytoplasm. The enzyme catalyses L-glutamate + acetyl-CoA = N-acetyl-L-glutamate + CoA + H(+). It functions in the pathway amino-acid biosynthesis; L-arginine biosynthesis; N(2)-acetyl-L-ornithine from L-glutamate: step 1/4. The chain is Amino-acid acetyltransferase from Pseudomonas putida (strain GB-1).